Consider the following 85-residue polypeptide: Sugar transporter SemiSWEET (85 aa).

The region spanning 2–59 is the PQ-loop domain; sequence ENLIGYVAAFLTTVSFLPQVLRVVMTKQTRDISRNMYIMFFLGVVLWFVYGILRSDLP. 3 helical membrane-spanning segments follow: residues 5-25, 33-53, and 57-77; these read IGYV…LRVV, ISRN…VYGI, and DLPI…ILYY.

In terms of assembly, homodimer.

Its subcellular location is the cell membrane. In terms of biological role, the homodimer mediates transmembrane sugar transport down a concentration gradient. Transport is probably effected by rocking-type movements, where a cargo-binding cavity opens first on one and then on the other side of the membrane. The polypeptide is Sugar transporter SemiSWEET (Leptospira biflexa serovar Patoc (strain Patoc 1 / ATCC 23582 / Paris)).